A 436-amino-acid polypeptide reads, in one-letter code: Histidinol dehydrogenase (436 aa).

Positions 135, 196, and 219 each coordinate NAD(+). Substrate-binding residues include Ser-242, Gln-264, and His-267. Residues Gln-264 and His-267 each contribute to the Zn(2+) site. Catalysis depends on proton acceptor residues Glu-332 and His-333. Residues His-333, Asp-366, Glu-420, and His-425 each coordinate substrate. Asp-366 serves as a coordination point for Zn(2+). His-425 contacts Zn(2+).

It belongs to the histidinol dehydrogenase family. Zn(2+) is required as a cofactor.

The catalysed reaction is L-histidinol + 2 NAD(+) + H2O = L-histidine + 2 NADH + 3 H(+). It participates in amino-acid biosynthesis; L-histidine biosynthesis; L-histidine from 5-phospho-alpha-D-ribose 1-diphosphate: step 9/9. Functionally, catalyzes the sequential NAD-dependent oxidations of L-histidinol to L-histidinaldehyde and then to L-histidine. In Methylococcus capsulatus (strain ATCC 33009 / NCIMB 11132 / Bath), this protein is Histidinol dehydrogenase.